Here is a 756-residue protein sequence, read N- to C-terminus: Ribosomal RNA large subunit methyltransferase K/L (756 aa).

One can recognise a THUMP domain in the interval Thr46–Leu157. Positions Glu395–Ala409 are enriched in basic and acidic residues. The disordered stretch occupies residues Glu395–Glu441.

This sequence belongs to the methyltransferase superfamily. RlmKL family.

The protein localises to the cytoplasm. The enzyme catalyses guanosine(2445) in 23S rRNA + S-adenosyl-L-methionine = N(2)-methylguanosine(2445) in 23S rRNA + S-adenosyl-L-homocysteine + H(+). The catalysed reaction is guanosine(2069) in 23S rRNA + S-adenosyl-L-methionine = N(2)-methylguanosine(2069) in 23S rRNA + S-adenosyl-L-homocysteine + H(+). In terms of biological role, specifically methylates the guanine in position 2445 (m2G2445) and the guanine in position 2069 (m7G2069) of 23S rRNA. The polypeptide is Ribosomal RNA large subunit methyltransferase K/L (Pseudomonas fluorescens (strain Pf0-1)).